Reading from the N-terminus, the 552-residue chain is Cytochrome P450 monooxyhenase eriI (552 aa).

A helical transmembrane segment spans residues 9-26 (FALKASAAVAVLLLAAWV). Residues Asn-50 and Asn-447 are each glycosylated (N-linked (GlcNAc...) asparagine). Cys-495 contributes to the heme binding site.

The protein belongs to the cytochrome P450 family. It depends on heme as a cofactor.

The protein resides in the membrane. It catalyses the reaction (-)-cyatha-3,12-diene + reduced [NADPH--hemoprotein reductase] + O2 = erinacol + oxidized [NADPH--hemoprotein reductase] + H2O + H(+). It functions in the pathway secondary metabolite biosynthesis. Its function is as follows. Cytochrome P450 monooxygenase; part of the gene cluster that mediates the biosynthesis of erinacines, cyathane-xylosides that show unique biological activities, including leishmanicidal activity, stimulating activity for nerve growth-factor synthesis, and agonistic activity toward the kappa opioid receptor. Within the pathway, eriI hydroxylates cyatha-3,12-diene at C-14 of the seven-membered ring to yield erinacol. The first step of the erinacines biosynthesis pathway is catalyzed by the geranylgeranyl diphosphate (GGPP) synthase eriE via conversion of farnesyl pyrophosphate and isopentyl pyrophosphate into geranylgeranyl pyrophosphate (GGPP). GGPP is then substrate of the diterpene cyclase eriG for the production of cyatha-3,12-diene. The cytochrome P450 monooxygenase eriI then hydroxylates cyatha-3,12-diene at C-14 of the seven-membered ring to produce erinacol, which is further hydroxylated at C-15 by the cytochrome P450 monooxygenase eriC to yield cyathadiol. The cytochrome P450 monooxygenase eriA then catalyzes C-11 hydroxylation in the presence of the short chain dehydrogenase/reductase (SDR) eriH, which leads to the production of cyathatriol. The acetyltransferase eriL converts cyathatriol into 11-O-acetyl-cyathatriol. The SDR eriH catalyzes further oxidation of 11-O-acetyl-cyathatriol into 1-O-acetylcyathin A3. Finally, the glycosyl transferase eriJ tranfers xylose from UDP-xylose onto C-14 of 11-O-acetyl-cyathatriol to form eracine Q. EriJ is also able to convert 11-O-acetyl-cyathatriol to eracine Q2 by using UDP-D-glucose as cosubstrate, but at a lower rate. Cytochrome P450 monooxygenase; part of the gene cluster that mediates the biosynthesis of erinacines, cyathane-xylosides that show unique biological activities, including leishmanicidal activity, stimulating activity for nerve growth-factor synthesis, and agonistic activity toward the kappa opioid receptor. The geranylgeranyl diphosphate (GGPP) synthase eriE catalyzes the first step in erinacines biosynthesis via conversion of farnesyl pyrophosphate and isopentyl pyrophosphate into geranylgeranyl pyrophosphate (GGPP). GGPP is then substrate of the diterpene cyclase eriG for the production of cyatha-3,12-diene. EriG is unable to use geranyl diphosphate (GPP) or farnesyl diphosphate (FPP) as substrates. The cytochrome P450 monooxygenase eriI then hydroxylates cyatha-3,12-diene at C-14 of the seven-membered ring to produce erinacol, which is further hydroxylated at C-15 by the cytochrome P450 monooxygenase eriC to yield cyathadiol. The cytochrome P450 monooxygenase eriA then catalyzes C-11 hydroxylation in the presence of the short chain dehydrogenase/reductase (SDR) eriH, which leads to the production of cyathatriol. The acetyltransferase eriL converts cyathatriol into 11-O-acetyl-cyathatriol. The SDR eriH catalyzes further oxidation of 11-O-acetyl-cyathatriol into 1-O-acetylcyathin A3. Finally, the glycosyl transferase eriJ tranfers xylose from UDP-xylose onto C-14 of 11-O-acetyl-cyathatriol to form eracine Q. EriJ is also able to convert 11-O-acetyl-cyathatriol to eracine Q2 by using UDP-D-glucose as cosubstrate, but at a lower rate. In the absence of eriL and eriJ, the SDR eriH is able to convert cyathatriol to cyathin A3; this is likely a switching mechanism in the biosynthesis of cyathins (C-14 ketogroup)and erinacines (C-14 glycosylated group). The roles of the SDR eriB, the polyprenyl transferase eriF and the dehydrogenase eriK have still to be identified. The sequence is that of Cytochrome P450 monooxyhenase eriI from Hericium erinaceus (Lion's mane mushroom).